A 175-amino-acid polypeptide reads, in one-letter code: Endoribonuclease YbeY (175 aa).

His-121, His-125, and His-131 together coordinate Zn(2+). Residues 154–175 are disordered; the sequence is PDPYSPAQQESQAQPENTELNP. Over residues 159–175 the composition is skewed to polar residues; the sequence is PAQQESQAQPENTELNP.

It belongs to the endoribonuclease YbeY family. Zn(2+) is required as a cofactor.

The protein resides in the cytoplasm. Single strand-specific metallo-endoribonuclease involved in late-stage 70S ribosome quality control and in maturation of the 3' terminus of the 16S rRNA. This is Endoribonuclease YbeY from Alcanivorax borkumensis (strain ATCC 700651 / DSM 11573 / NCIMB 13689 / SK2).